Consider the following 371-residue polypeptide: Methionine import ATP-binding protein MetN (371 aa).

Residues methionine 1–proline 22 form a disordered region. An ABC transporter domain is found at isoleucine 27–valine 268. An ATP-binding site is contributed by glycine 65–serine 72.

This sequence belongs to the ABC transporter superfamily. Methionine importer (TC 3.A.1.24) family. As to quaternary structure, the complex is composed of two ATP-binding proteins (MetN), two transmembrane proteins (MetI) and a solute-binding protein (MetQ).

It localises to the cell inner membrane. The catalysed reaction is L-methionine(out) + ATP + H2O = L-methionine(in) + ADP + phosphate + H(+). It carries out the reaction D-methionine(out) + ATP + H2O = D-methionine(in) + ADP + phosphate + H(+). Its function is as follows. Part of the ABC transporter complex MetNIQ involved in methionine import. Responsible for energy coupling to the transport system. The protein is Methionine import ATP-binding protein MetN of Rhodopseudomonas palustris (strain BisB5).